The following is a 629-amino-acid chain: Serine/threonine-protein kinase ICK (629 aa).

The 281-residue stretch at 4–284 folds into the Protein kinase domain; that stretch reads YTTIKQLGDG…ASQALRYPYF (281 aa). ATP is bound by residues 10-18 and Lys33; that span reads LGDGTYGSV. Asp125 serves as the catalytic Proton acceptor. Thr157 is subject to Phosphothreonine. Tyr159 carries the post-translational modification Phosphotyrosine. Phosphoserine is present on Ser161. Disordered stretches follow at residues 292–322, 454–482, and 579–629; these read ISTQ…PAQA, PSEP…QSTA, and GYSS…PSRR. Over residues 309-321 the composition is skewed to pro residues; it reads GPPPYVKPAPPAQ. A compositionally biased stretch (polar residues) spans 460 to 482; that stretch reads TGTSVSTQASSQRRDTPTLQSTA.

The protein belongs to the protein kinase superfamily. CMGC Ser/Thr protein kinase family. CDC2/CDKX subfamily. Requires Mg(2+) as cofactor. Post-translationally, autophosphorylated on serine and threonine residues. Phosphorylation at Thr-157 increases kinase activity. In terms of tissue distribution, expressed in embryonic heart from day 11. Highly expressed in the uterus and at lower levels in brain, heart, lung, kidney, skeletal muscle, ovary and liver in adult tissues.

The protein localises to the cytoplasm. It localises to the cell projection. The protein resides in the cilium. It is found in the nucleus. Its subcellular location is the cytoskeleton. The protein localises to the cilium basal body. The enzyme catalyses L-seryl-[protein] + ATP = O-phospho-L-seryl-[protein] + ADP + H(+). It carries out the reaction L-threonyl-[protein] + ATP = O-phospho-L-threonyl-[protein] + ADP + H(+). In terms of biological role, required for ciliogenesis, particularly in neuronal and retinal progenitor cells. Phosphorylates KIF3A. Involved in the control of ciliary length. Regulates the ciliary localization of SHH pathway components as well as the localization of IFT components at ciliary tips. May play a role in cardiac development. Regulates intraflagellar transport (IFT) speed and negatively regulates cilium length in a cAMP and mTORC1 signaling-dependent manner and this regulation requires its kinase activity. The protein is Serine/threonine-protein kinase ICK (Cilk1) of Rattus norvegicus (Rat).